A 227-amino-acid polypeptide reads, in one-letter code: Deoxyribose-phosphate aldolase (227 aa).

The active-site Proton donor/acceptor is the Asp96. Lys158 (schiff-base intermediate with acetaldehyde) is an active-site residue. Residue Lys187 is the Proton donor/acceptor of the active site.

Belongs to the DeoC/FbaB aldolase family. DeoC type 1 subfamily.

The protein resides in the cytoplasm. The enzyme catalyses 2-deoxy-D-ribose 5-phosphate = D-glyceraldehyde 3-phosphate + acetaldehyde. It functions in the pathway carbohydrate degradation; 2-deoxy-D-ribose 1-phosphate degradation; D-glyceraldehyde 3-phosphate and acetaldehyde from 2-deoxy-alpha-D-ribose 1-phosphate: step 2/2. Functionally, catalyzes a reversible aldol reaction between acetaldehyde and D-glyceraldehyde 3-phosphate to generate 2-deoxy-D-ribose 5-phosphate. The protein is Deoxyribose-phosphate aldolase of Desulfotalea psychrophila (strain LSv54 / DSM 12343).